The sequence spans 192 residues: Ras-like GTP-binding protein O-RHO (192 aa).

12-19 (GDGACGKT) lines the GTP pocket. The Effector region signature appears at 34–42 (YVPTVFENY). Residues 59–63 (DTAGQ) and 117–120 (NKKT) each bind GTP. C189 carries the cysteine methyl ester modification. C189 carries the S-geranylgeranyl cysteine lipid modification. The propeptide at 190-192 (LLL) is removed in mature form.

The protein belongs to the small GTPase superfamily. Rho family.

Its subcellular location is the cell membrane. This chain is Ras-like GTP-binding protein O-RHO, found in Diplobatis ommata (Ocellated electric ray).